The sequence spans 357 residues: Peptide chain release factor 1 (357 aa).

Q234 carries the N5-methylglutamine modification.

It belongs to the prokaryotic/mitochondrial release factor family. Methylated by PrmC. Methylation increases the termination efficiency of RF1.

Its subcellular location is the cytoplasm. Peptide chain release factor 1 directs the termination of translation in response to the peptide chain termination codons UAG and UAA. The polypeptide is Peptide chain release factor 1 (Lactococcus lactis subsp. cremoris (strain MG1363)).